The sequence spans 240 residues: Ribonuclease 3 (240 aa).

Positions 4 to 134 (SRQPLLDALG…LLGAIYLQHG (131 aa)) constitute an RNase III domain. Glutamate 44 contributes to the Mg(2+) binding site. The active site involves aspartate 48. The Mg(2+) site is built by aspartate 120 and glutamate 123. Glutamate 123 is a catalytic residue. The region spanning 161-229 (DWKTSLQELT…AAAAWKALEV (69 aa)) is the DRBM domain.

This sequence belongs to the ribonuclease III family. Homodimer. The cofactor is Mg(2+).

It is found in the cytoplasm. The catalysed reaction is Endonucleolytic cleavage to 5'-phosphomonoester.. Its function is as follows. Digests double-stranded RNA. Involved in the processing of primary rRNA transcript to yield the immediate precursors to the large and small rRNAs (23S and 16S). Processes some mRNAs, and tRNAs when they are encoded in the rRNA operon. Processes pre-crRNA and tracrRNA of type II CRISPR loci if present in the organism. The protein is Ribonuclease 3 of Mycobacterium bovis (strain ATCC BAA-935 / AF2122/97).